The primary structure comprises 339 residues: Phenylalanine--tRNA ligase alpha subunit (339 aa).

Residue E250 coordinates Mg(2+).

The protein belongs to the class-II aminoacyl-tRNA synthetase family. Phe-tRNA synthetase alpha subunit type 1 subfamily. Tetramer of two alpha and two beta subunits. Requires Mg(2+) as cofactor.

Its subcellular location is the cytoplasm. The catalysed reaction is tRNA(Phe) + L-phenylalanine + ATP = L-phenylalanyl-tRNA(Phe) + AMP + diphosphate + H(+). This Azobacteroides pseudotrichonymphae genomovar. CFP2 protein is Phenylalanine--tRNA ligase alpha subunit.